Reading from the N-terminus, the 228-residue chain is MNSVVLLSGGLDSAVNLAFARTEGNVKLALTINYRQRAAHKEIAAAAQLARYYAIPHRVIELPWLAEITKTALVRSESQLPEPKTEELDQLELAGKTAAEVWVPNRNGLFVNIAACFAETLHCEIVVAGFNCEEAATFPDNTPEFALAASAAMQYSTANQVKVLSYTGRLNKKDIVALGQRLQLPWELIWSCYRGEALMCGKCESCQRMIRAFHSLGLNLPQNFLMTE.

7 to 17 (LSGGLDSAVNL) provides a ligand contact to ATP. 4 residues coordinate Zn(2+): Cys-192, Cys-200, Cys-203, and Cys-206.

The protein belongs to the QueC family. Homodimer. Zn(2+) serves as cofactor.

The catalysed reaction is 7-carboxy-7-deazaguanine + NH4(+) + ATP = 7-cyano-7-deazaguanine + ADP + phosphate + H2O + H(+). It functions in the pathway purine metabolism; 7-cyano-7-deazaguanine biosynthesis. Functionally, catalyzes the ATP-dependent conversion of 7-carboxy-7-deazaguanine (CDG) to 7-cyano-7-deazaguanine (preQ(0)). This chain is 7-cyano-7-deazaguanine synthase, found in Desulforamulus reducens (strain ATCC BAA-1160 / DSM 100696 / MI-1) (Desulfotomaculum reducens).